A 432-amino-acid polypeptide reads, in one-letter code: UDP-N-acetylmuramate--L-alanine ligase (432 aa).

An ATP-binding site is contributed by 109-115; that stretch reads GAHGKST.

Belongs to the MurCDEF family.

The protein localises to the cytoplasm. The enzyme catalyses UDP-N-acetyl-alpha-D-muramate + L-alanine + ATP = UDP-N-acetyl-alpha-D-muramoyl-L-alanine + ADP + phosphate + H(+). It participates in cell wall biogenesis; peptidoglycan biosynthesis. Its function is as follows. Cell wall formation. The chain is UDP-N-acetylmuramate--L-alanine ligase from Campylobacter jejuni subsp. jejuni serotype O:2 (strain ATCC 700819 / NCTC 11168).